The following is a 232-amino-acid chain: Phosphatidylserine decarboxylase proenzyme (232 aa).

The active-site Schiff-base intermediate with substrate; via pyruvic acid is S190. S190 bears the Pyruvic acid (Ser); by autocatalysis mark.

The protein belongs to the phosphatidylserine decarboxylase family. PSD-A subfamily. As to quaternary structure, heterodimer of a large membrane-associated beta subunit and a small pyruvoyl-containing alpha subunit. Requires pyruvate as cofactor. Post-translationally, is synthesized initially as an inactive proenzyme. Formation of the active enzyme involves a self-maturation process in which the active site pyruvoyl group is generated from an internal serine residue via an autocatalytic post-translational modification. Two non-identical subunits are generated from the proenzyme in this reaction, and the pyruvate is formed at the N-terminus of the alpha chain, which is derived from the carboxyl end of the proenzyme. The post-translation cleavage follows an unusual pathway, termed non-hydrolytic serinolysis, in which the side chain hydroxyl group of the serine supplies its oxygen atom to form the C-terminus of the beta chain, while the remainder of the serine residue undergoes an oxidative deamination to produce ammonia and the pyruvoyl prosthetic group on the alpha chain.

The protein localises to the cell membrane. The catalysed reaction is a 1,2-diacyl-sn-glycero-3-phospho-L-serine + H(+) = a 1,2-diacyl-sn-glycero-3-phosphoethanolamine + CO2. It participates in phospholipid metabolism; phosphatidylethanolamine biosynthesis; phosphatidylethanolamine from CDP-diacylglycerol: step 2/2. Functionally, catalyzes the formation of phosphatidylethanolamine (PtdEtn) from phosphatidylserine (PtdSer). This chain is Phosphatidylserine decarboxylase proenzyme, found in Afipia carboxidovorans (strain ATCC 49405 / DSM 1227 / KCTC 32145 / OM5) (Oligotropha carboxidovorans).